The chain runs to 99 residues: Large ribosomal subunit protein uL23 (99 aa).

This sequence belongs to the universal ribosomal protein uL23 family. In terms of assembly, part of the 50S ribosomal subunit. Contacts protein L29, and trigger factor when it is bound to the ribosome.

Functionally, one of the early assembly proteins it binds 23S rRNA. One of the proteins that surrounds the polypeptide exit tunnel on the outside of the ribosome. Forms the main docking site for trigger factor binding to the ribosome. In Saccharopolyspora erythraea (strain ATCC 11635 / DSM 40517 / JCM 4748 / NBRC 13426 / NCIMB 8594 / NRRL 2338), this protein is Large ribosomal subunit protein uL23.